The chain runs to 262 residues: Acyl-coenzyme A diphosphatase FITM2 (262 aa).

At 1–23 (MEHLERCAWVLRGTLVRSAVRKY) the chain is on the cytoplasmic side. The helical transmembrane segment at 24-44 (LPWALAASMLAGSLLKELSPL) threads the bilayer. Topologically, residues 45-57 (PESYLSNKRNVLN) are lumenal. A helical membrane pass occupies residues 58–78 (VYFVKVAWAWTFCLLLPFIAL). The Cytoplasmic segment spans residues 79–93 (TNYHLTGKAGLVLRR). Residues 94-114 (LSTLLVGTAIWYVCTAIFSNI) traverse the membrane as a helical segment. Residues 115–145 (EHYTGSCYQSPALEGERKEHQSKQQCHGEGG) lie on the Lumenal side of the membrane. A helical membrane pass occupies residues 146 to 166 (FWHGFDISGHSFLLTFCALMI). H155 is an active-site residue. Topologically, residues 167–190 (VEEMAVLHEVKTDRNHCLHAAITT) are cytoplasmic. A helical transmembrane segment spans residues 191-211 (LVVALGFLTFIWVWMFLCTAV). Topologically, residues 212–218 (YFHNLSQ) are lumenal. H214 is an active-site residue. A helical membrane pass occupies residues 219–239 (KVFGTLFGLLGWYGTYGCWYL). Over 240 to 262 (KSFSPGLPPQSSSLNLKQDTYKK) the chain is Cytoplasmic.

It belongs to the FIT family. FIT2 subfamily.

Its subcellular location is the endoplasmic reticulum membrane. It carries out the reaction an acyl-CoA + H2O = an acyl-4'-phosphopantetheine + adenosine 3',5'-bisphosphate + 2 H(+). The enzyme catalyses (9Z)-octadecenoyl-CoA + H2O = S-(9Z-octadecenoyl)-4'-phosphopantetheine + adenosine 3',5'-bisphosphate + 2 H(+). It catalyses the reaction (5Z,8Z,11Z,14Z)-eicosatetraenoyl-CoA + H2O = S-(5Z,8Z,11Z,14Z-eicosatetraenoyl)-4'-phosphopantetheine + adenosine 3',5'-bisphosphate + 2 H(+). The catalysed reaction is hexadecanoyl-CoA + H2O = S-hexadecanoyl-4'-phosphopantetheine + adenosine 3',5'-bisphosphate + 2 H(+). Functionally, fatty acyl-coenzyme A (CoA) diphosphatase that hydrolyzes fatty acyl-CoA to yield acyl-4'-phosphopantetheine and adenosine 3',5'-bisphosphate. Preferentially hydrolyzes unsaturated long-chain acyl-CoA substrates such as oleoyl-CoA/(9Z)-octadecenoyl-CoA and arachidonoyl-CoA/(5Z,8Z,11Z,14Z)-eicosatetraenoyl-CoA in the endoplasmic reticulum (ER) lumen. This catalytic activity is required for maintaining ER structure and for lipid droplets (LDs) biogenesis, which are lipid storage organelles involved in maintaining lipid and energy homeostasis. Directly binds to diacylglycerol (DAGs) and triacylglycerol, which is also important for LD biogenesis. May support directional budding of nacent LDs from the ER into the cytosol by reducing DAG levels at sites of LD formation. Plays a role in the regulation of cell morphology and cytoskeletal organization. This is Acyl-coenzyme A diphosphatase FITM2 from Bos taurus (Bovine).